A 198-amino-acid chain; its full sequence is MIEFVYPHTQLVAGVDEVGRGPLVGAVVTAAVILDPARPIAGLNDSKKLSEKRRLALYEEIKEKALSWSLGRAEPHEIDELNILHATMLAMQRAVAGLHIAPEYVLIDGNRCPKLPMPAMAVVKGDSRVPEISAASILAKVTRDAEMAALDIVFPQYGFAQHKGYPTAFHLEKLAEYGATEHHRRSFGPVKRALGLAS.

The RNase H type-2 domain maps to 10–198 (QLVAGVDEVG…PVKRALGLAS (189 aa)). Residues Asp16, Glu17, and Asp108 each coordinate a divalent metal cation.

It belongs to the RNase HII family. It depends on Mn(2+) as a cofactor. Requires Mg(2+) as cofactor.

It localises to the cytoplasm. It carries out the reaction Endonucleolytic cleavage to 5'-phosphomonoester.. Endonuclease that specifically degrades the RNA of RNA-DNA hybrids. The polypeptide is Ribonuclease HII (Shigella dysenteriae serotype 1 (strain Sd197)).